We begin with the raw amino-acid sequence, 507 residues long: MALKLMIQGTASSVGKSLLVAAFCRIFKQDGYRVAPFKSQNMALNSYITDEGLEIGRAQAMQAEAAGVKPSYHMNPILLKPSSDKKSQVVLRGKVYKNMSAAEYHQFKPQLLKFIKEDFDFLASQNDIVVIEGAGSPAEINLRDRDVVNMGMAEMVNAPVLLVGDIDKGGVFASIAGTLLLLKENERNRIEGVLINKFRGDIEILKPGLEMLENIVHKKVLGVVPYMDVHIDEEDGATERFYRRSTEGDIEIAVINLPHISNFTDFEPLAKVPGVKLRYVNKGERIGDCDVVIIPGTKNTIGDLQALKGYRLDKEIFEMRKKGKFIVGICGGYQILGKVIKDPGRIESTTSEIEGLGLLDVETVIENEKTTTQIKAVIRNNLPSILSPLRNIAVEGYEIHMGKSRILGDCQPFSVITHRNGEKIEVYDGCISDDGKVFGTYIHGIFENREFVREFINIVRKSKGLSPIEEIIDYKEFKEREYDKLADIVRKSIDMKKVYEIMERYKD.

Residues 249-451 (DIEIAVINLP…IHGIFENREF (203 aa)) enclose the GATase cobBQ-type domain. Cys330 acts as the Nucleophile in catalysis. His443 is an active-site residue.

This sequence belongs to the CobB/CobQ family. CobQ subfamily.

It participates in cofactor biosynthesis; adenosylcobalamin biosynthesis. Its function is as follows. Catalyzes amidations at positions B, D, E, and G on adenosylcobyrinic A,C-diamide. NH(2) groups are provided by glutamine, and one molecule of ATP is hydrogenolyzed for each amidation. In Thermoanaerobacter sp. (strain X514), this protein is Cobyric acid synthase.